The sequence spans 657 residues: Methionine--tRNA ligase (657 aa).

Residues 13 to 23 (YYPSGNLHIGH) carry the 'HIGH' region motif. A 'KMSKS' region motif is present at residues 308–312 (KMSKS). Lysine 311 serves as a coordination point for ATP. A tRNA-binding domain is found at 557–657 (DFDKVEIKAA…SAIPNGAVIK (101 aa)).

Belongs to the class-I aminoacyl-tRNA synthetase family. MetG type 2B subfamily. In terms of assembly, homodimer.

It localises to the cytoplasm. The enzyme catalyses tRNA(Met) + L-methionine + ATP = L-methionyl-tRNA(Met) + AMP + diphosphate. Its function is as follows. Is required not only for elongation of protein synthesis but also for the initiation of all mRNA translation through initiator tRNA(fMet) aminoacylation. The sequence is that of Methionine--tRNA ligase from Staphylococcus aureus (strain COL).